The chain runs to 434 residues: Methylenetetrahydrofolate--tRNA-(uracil-5-)-methyltransferase TrmFO (434 aa).

9–14 (GGGLAG) is a binding site for FAD.

Belongs to the MnmG family. TrmFO subfamily. It depends on FAD as a cofactor.

The protein resides in the cytoplasm. It carries out the reaction uridine(54) in tRNA + (6R)-5,10-methylene-5,6,7,8-tetrahydrofolate + NADH + H(+) = 5-methyluridine(54) in tRNA + (6S)-5,6,7,8-tetrahydrofolate + NAD(+). The catalysed reaction is uridine(54) in tRNA + (6R)-5,10-methylene-5,6,7,8-tetrahydrofolate + NADPH + H(+) = 5-methyluridine(54) in tRNA + (6S)-5,6,7,8-tetrahydrofolate + NADP(+). Functionally, catalyzes the folate-dependent formation of 5-methyl-uridine at position 54 (M-5-U54) in all tRNAs. This Geobacter sulfurreducens (strain ATCC 51573 / DSM 12127 / PCA) protein is Methylenetetrahydrofolate--tRNA-(uracil-5-)-methyltransferase TrmFO.